The primary structure comprises 235 residues: 5'-methylthioadenosine/S-adenosylhomocysteine nucleosidase (235 aa).

Glutamate 12 acts as the Proton acceptor in catalysis. Residues glycine 78, isoleucine 152, and 173–174 each bind substrate; that span reads ME. Aspartate 197 serves as the catalytic Proton donor.

The protein belongs to the PNP/UDP phosphorylase family. MtnN subfamily. Homodimer.

The enzyme catalyses S-adenosyl-L-homocysteine + H2O = S-(5-deoxy-D-ribos-5-yl)-L-homocysteine + adenine. The catalysed reaction is S-methyl-5'-thioadenosine + H2O = 5-(methylsulfanyl)-D-ribose + adenine. It carries out the reaction 5'-deoxyadenosine + H2O = 5-deoxy-D-ribose + adenine. Its pathway is amino-acid biosynthesis; L-methionine biosynthesis via salvage pathway; S-methyl-5-thio-alpha-D-ribose 1-phosphate from S-methyl-5'-thioadenosine (hydrolase route): step 1/2. Its function is as follows. Catalyzes the irreversible cleavage of the glycosidic bond in both 5'-methylthioadenosine (MTA) and S-adenosylhomocysteine (SAH/AdoHcy) to adenine and the corresponding thioribose, 5'-methylthioribose and S-ribosylhomocysteine, respectively. Also cleaves 5'-deoxyadenosine, a toxic by-product of radical S-adenosylmethionine (SAM) enzymes, into 5-deoxyribose and adenine. Thus, is required for in vivo function of the radical SAM enzymes biotin synthase and lipoic acid synthase, that are inhibited by 5'-deoxyadenosine accumulation. The polypeptide is 5'-methylthioadenosine/S-adenosylhomocysteine nucleosidase (Buchnera aphidicola subsp. Schizaphis graminum (strain Sg)).